The chain runs to 366 residues: sn-glycerol-3-phosphate import ATP-binding protein UgpC (366 aa).

One can recognise an ABC transporter domain in the interval 4 to 235 (LSLRNVQKTY…PASTFVAGFI (232 aa)). Residue 37–44 (GPSGCGKS) participates in ATP binding.

It belongs to the ABC transporter superfamily. sn-glycerol-3-phosphate importer (TC 3.A.1.1.3) family. As to quaternary structure, the complex is composed of two ATP-binding proteins (UgpC), two transmembrane proteins (UgpA and UgpE) and a solute-binding protein (UgpB).

Its subcellular location is the cell inner membrane. It catalyses the reaction sn-glycerol 3-phosphate(out) + ATP + H2O = sn-glycerol 3-phosphate(in) + ADP + phosphate + H(+). Its function is as follows. Part of the ABC transporter complex UgpBAEC involved in sn-glycerol-3-phosphate (G3P) import. Responsible for energy coupling to the transport system. The protein is sn-glycerol-3-phosphate import ATP-binding protein UgpC of Cupriavidus necator (strain ATCC 17699 / DSM 428 / KCTC 22496 / NCIMB 10442 / H16 / Stanier 337) (Ralstonia eutropha).